Here is a 467-residue protein sequence, read N- to C-terminus: Methylenetetrahydrofolate--tRNA-(uracil-5-)-methyltransferase TrmFO (467 aa).

11–16 (GAGLAG) lines the FAD pocket.

Belongs to the MnmG family. TrmFO subfamily. FAD is required as a cofactor.

The protein localises to the cytoplasm. The catalysed reaction is uridine(54) in tRNA + (6R)-5,10-methylene-5,6,7,8-tetrahydrofolate + NADH + H(+) = 5-methyluridine(54) in tRNA + (6S)-5,6,7,8-tetrahydrofolate + NAD(+). The enzyme catalyses uridine(54) in tRNA + (6R)-5,10-methylene-5,6,7,8-tetrahydrofolate + NADPH + H(+) = 5-methyluridine(54) in tRNA + (6S)-5,6,7,8-tetrahydrofolate + NADP(+). Functionally, catalyzes the folate-dependent formation of 5-methyl-uridine at position 54 (M-5-U54) in all tRNAs. The sequence is that of Methylenetetrahydrofolate--tRNA-(uracil-5-)-methyltransferase TrmFO from Prochlorococcus marinus (strain NATL2A).